We begin with the raw amino-acid sequence, 143 residues long: Transcriptional regulator MraZ (143 aa).

2 consecutive SpoVT-AbrB domains span residues 5–47 (THTP…PMQE) and 76–119 (ASSE…DLRT).

Belongs to the MraZ family. Forms oligomers.

It localises to the cytoplasm. Its subcellular location is the nucleoid. The protein is Transcriptional regulator MraZ of Kineococcus radiotolerans (strain ATCC BAA-149 / DSM 14245 / SRS30216).